The primary structure comprises 268 residues: Tryptophan synthase alpha chain (268 aa).

Residues Glu49 and Asp60 each act as proton acceptor in the active site.

It belongs to the TrpA family. In terms of assembly, tetramer of two alpha and two beta chains.

It catalyses the reaction (1S,2R)-1-C-(indol-3-yl)glycerol 3-phosphate + L-serine = D-glyceraldehyde 3-phosphate + L-tryptophan + H2O. Its pathway is amino-acid biosynthesis; L-tryptophan biosynthesis; L-tryptophan from chorismate: step 5/5. Its function is as follows. The alpha subunit is responsible for the aldol cleavage of indoleglycerol phosphate to indole and glyceraldehyde 3-phosphate. The sequence is that of Tryptophan synthase alpha chain from Vibrio vulnificus (strain CMCP6).